Reading from the N-terminus, the 293-residue chain is Undecaprenyl-diphosphatase (293 aa).

The next 6 membrane-spanning stretches (helical) occupy residues 74 to 94, 107 to 127, 134 to 154, 209 to 229, 243 to 263, and 271 to 291; these read VLVF…AGVF, WMII…KDLI, MWIT…AEKM, FLLA…DAFA, VGTL…MKFV, and FAAY…LGML.

Belongs to the UppP family.

It is found in the cell membrane. It carries out the reaction di-trans,octa-cis-undecaprenyl diphosphate + H2O = di-trans,octa-cis-undecaprenyl phosphate + phosphate + H(+). Functionally, catalyzes the dephosphorylation of undecaprenyl diphosphate (UPP). Confers resistance to bacitracin. The polypeptide is Undecaprenyl-diphosphatase (Corynebacterium glutamicum (strain R)).